A 462-amino-acid polypeptide reads, in one-letter code: Signal recognition particle protein (462 aa).

GTP-binding positions include 107 to 114 (GLQGAGKT), 190 to 194 (DTAGR), and 248 to 251 (TKVD).

It belongs to the GTP-binding SRP family. SRP54 subfamily. In terms of assembly, part of the signal recognition particle protein translocation system, which is composed of SRP and FtsY. SRP is a ribonucleoprotein composed of Ffh and a 4.5S RNA molecule.

It is found in the cytoplasm. The catalysed reaction is GTP + H2O = GDP + phosphate + H(+). Functionally, involved in targeting and insertion of nascent membrane proteins into the cytoplasmic membrane. Binds to the hydrophobic signal sequence of the ribosome-nascent chain (RNC) as it emerges from the ribosomes. The SRP-RNC complex is then targeted to the cytoplasmic membrane where it interacts with the SRP receptor FtsY. Interaction with FtsY leads to the transfer of the RNC complex to the Sec translocase for insertion into the membrane, the hydrolysis of GTP by both Ffh and FtsY, and the dissociation of the SRP-FtsY complex into the individual components. This is Signal recognition particle protein from Haemophilus influenzae (strain ATCC 51907 / DSM 11121 / KW20 / Rd).